A 296-amino-acid polypeptide reads, in one-letter code: Dof zinc finger protein DOF3.7 (296 aa).

Positions 41 to 69 (NTRPNATASNGGSGGNTNNTATMETRKAR) are disordered. The segment covering 45 to 62 (NATASNGGSGGNTNNTAT) has biased composition (low complexity). A Dof-type zinc finger spans residues 74 to 128 (VNCPRCNSTNTKFCYYNNYSLTQPRYFCKGCRRYWTEGGSLRNVPVGGSSRKNKR). 4 residues coordinate Zn(2+): C76, C79, C101, and C104. The segment at 115 to 146 (RNVPVGGSSRKNKRSSTPLASPSNPKLPDLNP) is disordered. Over residues 129-138 (SSTPLASPSN) the composition is skewed to polar residues.

Expressed in the phloem of the mother plant, including in roots, stem, leaves and flowers, but not present in the seed and embryo. In maturing siliques, found all through the funiculus connecting the placenta to the ovule, but not in the ovule.

Its subcellular location is the nucleus. In terms of biological role, transcription factor specifically involved in the maternal control of seed germination. Regulates transcription by binding to a 5'-AA[AG]G-3' consensus core sequence. May ensure the inactivity of a component that would be activated to trigger germination as a consequence of red light perception. This Arabidopsis thaliana (Mouse-ear cress) protein is Dof zinc finger protein DOF3.7 (DOF3.7).